The primary structure comprises 173 residues: Large ribosomal subunit protein uL10 (173 aa).

It belongs to the universal ribosomal protein uL10 family. In terms of assembly, part of the ribosomal stalk of the 50S ribosomal subunit. The N-terminus interacts with L11 and the large rRNA to form the base of the stalk. The C-terminus forms an elongated spine to which L12 dimers bind in a sequential fashion forming a multimeric L10(L12)X complex.

Functionally, forms part of the ribosomal stalk, playing a central role in the interaction of the ribosome with GTP-bound translation factors. This Bifidobacterium longum (strain DJO10A) protein is Large ribosomal subunit protein uL10.